A 272-amino-acid polypeptide reads, in one-letter code: F-box protein PP2-B10 (272 aa).

The F-box domain occupies 11–57 (SSPFDSFPEDCISYIISFTNPRDACVAATVSKTFESTVKSDIIWEKF).

In terms of assembly, part of a SCF (ASK-cullin-F-box) protein ligase complex. Interacts with SKP1B/ASK2, ASK11 and ASK12.

The protein operates within protein modification; protein ubiquitination. Its function is as follows. Component of SCF(ASK-cullin-F-box) E3 ubiquitin ligase complexes, which may mediate the ubiquitination and subsequent proteasomal degradation of target proteins. The polypeptide is F-box protein PP2-B10 (PP2B10) (Arabidopsis thaliana (Mouse-ear cress)).